The primary structure comprises 426 residues: Serine--tRNA ligase (426 aa).

Residue 233–235 (TAE) participates in L-serine binding. Position 264–266 (264–266 (RSE)) interacts with ATP. E287 contacts L-serine. 351-354 (EISS) is a binding site for ATP. An L-serine-binding site is contributed by S387.

The protein belongs to the class-II aminoacyl-tRNA synthetase family. Type-1 seryl-tRNA synthetase subfamily. As to quaternary structure, homodimer. The tRNA molecule binds across the dimer.

The protein localises to the cytoplasm. The catalysed reaction is tRNA(Ser) + L-serine + ATP = L-seryl-tRNA(Ser) + AMP + diphosphate + H(+). The enzyme catalyses tRNA(Sec) + L-serine + ATP = L-seryl-tRNA(Sec) + AMP + diphosphate + H(+). Its pathway is aminoacyl-tRNA biosynthesis; selenocysteinyl-tRNA(Sec) biosynthesis; L-seryl-tRNA(Sec) from L-serine and tRNA(Sec): step 1/1. Functionally, catalyzes the attachment of serine to tRNA(Ser). Is also able to aminoacylate tRNA(Sec) with serine, to form the misacylated tRNA L-seryl-tRNA(Sec), which will be further converted into selenocysteinyl-tRNA(Sec). The protein is Serine--tRNA ligase of Clostridium tetani (strain Massachusetts / E88).